The following is a 548-amino-acid chain: Cilia- and flagella-associated protein 97 (548 aa).

Phosphoserine is present on residues Ser-8 and Ser-19. Disordered regions lie at residues 85 to 297, 407 to 431, and 497 to 548; these read NYLT…RQEN, LSRQAEKPGNKSTIPGRSLGHPPKL, and YSPL…LRSH. A compositionally biased stretch (basic and acidic residues) spans 91–107; it reads GNERKPKFPSKEQHVEN. Low complexity predominate over residues 112 to 121; sequence TRSPSLLTSS. A compositionally biased stretch (acidic residues) spans 152-161; it reads DYYTDGEESS. Thr-155 carries the phosphothreonine modification. Phosphoserine occurs at positions 160 and 161. Residues 191-209 show a composition bias toward low complexity; that stretch reads KASSSSLSSSSSRSSSDCS. Over residues 214 to 237 the composition is skewed to polar residues; sequence DMQNKPDSGSSGKRVSSVTPSSPK. Phosphoserine is present on Ser-235. Residues 238 to 248 are compositionally biased toward basic residues; the sequence is QKCKSGRKSSA. Ser-259 is subject to Phosphoserine. Residues 264–289 are compositionally biased toward polar residues; the sequence is TDVTPASTPDSSPAQPFELSQSQNQK. Positions 383-460 form a coiled coil; the sequence is RKNYSFTREE…ALLKRLEAVK (78 aa). Composition is skewed to polar residues over residues 504–514 and 537–548; these read SRTSSATSGLS and IQCSNSKVLRSH.

The protein belongs to the CFAP97 family.

In Rattus norvegicus (Rat), this protein is Cilia- and flagella-associated protein 97.